The primary structure comprises 162 residues: Peptidyl-prolyl cis-trans isomerase (162 aa).

One can recognise a PPIase cyclophilin-type domain in the interval 5–161; it reads FFDVQFGGDA…TTIKIVDSGV (157 aa).

Belongs to the cyclophilin-type PPIase family. PPIase A subfamily.

It carries out the reaction [protein]-peptidylproline (omega=180) = [protein]-peptidylproline (omega=0). Its activity is regulated as follows. Binds cyclosporin A (CsA). CsA mediates some of its effects via an inhibitory action on PPIase. In terms of biological role, PPIases accelerate the folding of proteins. It catalyzes the cis-trans isomerization of proline imidic peptide bonds in oligopeptides. The polypeptide is Peptidyl-prolyl cis-trans isomerase (Paramecium primaurelia).